The sequence spans 101 residues: NAD(P)H-quinone oxidoreductase subunit 4L, chloroplastic (101 aa).

Transmembrane regions (helical) follow at residues 2–22 (ILEH…YGLI), 32–52 (MCLE…SDFF), and 61–81 (IFSI…PAIL).

This sequence belongs to the complex I subunit 4L family. As to quaternary structure, NDH is composed of at least 16 different subunits, 5 of which are encoded in the nucleus.

The protein resides in the plastid. The protein localises to the chloroplast thylakoid membrane. The catalysed reaction is a plastoquinone + NADH + (n+1) H(+)(in) = a plastoquinol + NAD(+) + n H(+)(out). It catalyses the reaction a plastoquinone + NADPH + (n+1) H(+)(in) = a plastoquinol + NADP(+) + n H(+)(out). Functionally, NDH shuttles electrons from NAD(P)H:plastoquinone, via FMN and iron-sulfur (Fe-S) centers, to quinones in the photosynthetic chain and possibly in a chloroplast respiratory chain. The immediate electron acceptor for the enzyme in this species is believed to be plastoquinone. Couples the redox reaction to proton translocation, and thus conserves the redox energy in a proton gradient. This chain is NAD(P)H-quinone oxidoreductase subunit 4L, chloroplastic, found in Platanus occidentalis (Sycamore).